A 41-amino-acid chain; its full sequence is MQDVKTYLSTAPVLATLWFGLLAGILIEINRFFPDALVLPY.

A helical transmembrane segment spans residues Tyr-7–Ile-27.

Belongs to the PsaJ family.

Its subcellular location is the plastid. The protein localises to the chloroplast thylakoid membrane. Its function is as follows. May help in the organization of the PsaE and PsaF subunits. The polypeptide is Photosystem I reaction center subunit IX (Chara vulgaris (Common stonewort)).